A 643-amino-acid polypeptide reads, in one-letter code: Aspartic protease 3 (643 aa).

The signal sequence occupies residues 1-31 (MEGRTTAGRATPAGFWLFSCCLASVLWSANA). The span at 87-99 (APEVSGAAGASAS) shows a compositional bias: low complexity. Residues 87 to 116 (APEVSGAAGASASKTSEKPIRPYHTGPSSR) are disordered. The Peptidase A1 domain maps to 281-600 (YVGVIGIGTP…GTRPSLVGIA (320 aa)). Residues D299 and D490 contribute to the active site.

The protein belongs to the peptidase A1 family.

The protein localises to the endomembrane system. Its activity is regulated as follows. Inhibited by 49c, a hydroxyethylamine scaffold-based compound. In terms of biological role, required for the processing-mediated maturation of a subset of microneme proteins, such as MIC6, and rhoptry proteins, such as ROP1. By regulating microneme and rhoptry processing, plays an essential role in the lysis of the host cell membrane during egress and in rhoptry content discharge, which is required for invasion of host cells. The chain is Aspartic protease 3 from Toxoplasma gondii.